A 401-amino-acid chain; its full sequence is MDKQHSKQRIVVGLSGGVDSAVTAYLLKQQGHEVIGIFMKNWEDDDDSEYCSSNIDFVDAAAVADVIGIEIEHVNFAADYKDRVFAEFLREYQAGRTPNPDILCNAEIKFKAFLDHAMRLGAEKIATGHYARVRRNESTGLHELLKGLDPAKDQSYFLHRLNQAQLSKTLFPVGELHKTEVRRIADEIGLPNAKKKDSTGICFIGERPFRDFLNRYIAKAPGPIKNDRGRVLGKHVGLSFYTLGQRQGLGIGGVKARGAELKAAQARGQRGVGEHEPWFVARKDLDTNTLWVVQGHDHPWLQSTVLSAQDCSWVAGTAPAAGLMAAKTRYRQVDATCELRSATTANCELVFAEPQWAVTPGQSAVLYQGDVCLGGGVIAASNVPNTLPTVSTRSTPELLVK.

ATP contacts are provided by residues 13–20 (GLSGGVDS) and M39. The interaction with target base in tRNA stretch occupies residues 99-101 (NPD). The active-site Nucleophile is C104. A disulfide bond links C104 and C202. An ATP-binding site is contributed by G128. An interaction with tRNA region spans residues 152–154 (KDQ). The Cysteine persulfide intermediate role is filled by C202. Residues 329–330 (RY) are interaction with tRNA.

The protein belongs to the MnmA/TRMU family.

The protein localises to the cytoplasm. The enzyme catalyses S-sulfanyl-L-cysteinyl-[protein] + uridine(34) in tRNA + AH2 + ATP = 2-thiouridine(34) in tRNA + L-cysteinyl-[protein] + A + AMP + diphosphate + H(+). In terms of biological role, catalyzes the 2-thiolation of uridine at the wobble position (U34) of tRNA, leading to the formation of s(2)U34. In Polaromonas sp. (strain JS666 / ATCC BAA-500), this protein is tRNA-specific 2-thiouridylase MnmA.